A 631-amino-acid chain; its full sequence is Glutamyl-tRNA(Gln) amidotransferase subunit E (631 aa).

Belongs to the GatB/GatE family. GatE subfamily. Heterodimer of GatD and GatE.

It carries out the reaction L-glutamyl-tRNA(Gln) + L-glutamine + ATP + H2O = L-glutaminyl-tRNA(Gln) + L-glutamate + ADP + phosphate + H(+). Its function is as follows. Allows the formation of correctly charged Gln-tRNA(Gln) through the transamidation of misacylated Glu-tRNA(Gln) in organisms which lack glutaminyl-tRNA synthetase. The reaction takes place in the presence of glutamine and ATP through an activated gamma-phospho-Glu-tRNA(Gln). The GatDE system is specific for glutamate and does not act on aspartate. This is Glutamyl-tRNA(Gln) amidotransferase subunit E from Methanococcus maripaludis (strain C5 / ATCC BAA-1333).